Here is a 149-residue protein sequence, read N- to C-terminus: Calmodulin-3 (149 aa).

Ala2 carries the N-acetylalanine modification. EF-hand domains follow at residues 8–43, 44–79, 81–116, and 117–149; these read DQIA…LGQN, PTEA…KMKD, DSEE…LGEK, and LTDE…MMAK. Asp21, Asp23, Asp25, Cys27, Glu32, Asp57, Asp59, Asn61, Thr63, Glu68, Asp94, Asp96, Asn98, and Glu105 together coordinate Ca(2+). Lys116 carries the N6,N6,N6-trimethyllysine modification. Ca(2+)-binding residues include Asp130, Asp132, Asp134, Gln136, and Glu141.

It belongs to the calmodulin family.

Functionally, calmodulin mediates the control of a large number of enzymes, ion channels and other proteins by Ca(2+). Among the enzymes to be stimulated by the calmodulin-Ca(2+) complex are a number of protein kinases and phosphatases. The sequence is that of Calmodulin-3 (CAM3) from Oryza sativa subsp. japonica (Rice).